The following is a 313-amino-acid chain: Probable pyridoxal 5'-phosphate synthase subunit PDX1.2 (313 aa).

D42 contributes to the D-ribose 5-phosphate binding site. Catalysis depends on K99, which acts as the Schiff-base intermediate with D-ribose 5-phosphate. G171 provides a ligand contact to D-ribose 5-phosphate. R183 is a binding site for D-glyceraldehyde 3-phosphate. D-ribose 5-phosphate is bound by residues G232 and 253 to 254; that span reads GS.

This sequence belongs to the PdxS/SNZ family.

The enzyme catalyses aldehydo-D-ribose 5-phosphate + D-glyceraldehyde 3-phosphate + L-glutamine = pyridoxal 5'-phosphate + L-glutamate + phosphate + 3 H2O + H(+). It participates in cofactor biosynthesis; pyridoxal 5'-phosphate biosynthesis. In terms of biological role, catalyzes the formation of pyridoxal 5'-phosphate from ribose 5-phosphate (RBP), glyceraldehyde 3-phosphate (G3P) and ammonia. The ammonia is provided by PDX2. Can also use ribulose 5-phosphate and dihydroxyacetone phosphate as substrates, resulting from enzyme-catalyzed isomerization of RBP and G3P, respectively. Also plays an indirect role in resistance to singlet oxygen-generating photosensitizers. This Oryza sativa subsp. japonica (Rice) protein is Probable pyridoxal 5'-phosphate synthase subunit PDX1.2 (PDX12).